Reading from the N-terminus, the 233-residue chain is CDP-diacylglycerol--glycerol-3-phosphate 3-phosphatidyltransferase 2 (233 aa).

Residues 1 to 23 (MGEEDTATVDQNSFGGGKDSLLR) are disordered. The next 5 membrane-spanning stretches (helical) occupy residues 40–60 (VITL…ILVA), 71–91 (TATT…GYIA), 100–120 (FGAF…LILL), 125–145 (MVAV…IAII), and 201–221 (LPSG…SLVV).

This sequence belongs to the CDP-alcohol phosphatidyltransferase class-I family. The cofactor is Mn(2+).

The protein resides in the microsome membrane. It is found in the endoplasmic reticulum membrane. The enzyme catalyses a CDP-1,2-diacyl-sn-glycerol + sn-glycerol 3-phosphate = a 1,2-diacyl-sn-glycero-3-phospho-(1'-sn-glycero-3'-phosphate) + CMP + H(+). The protein operates within phospholipid metabolism; phosphatidylglycerol biosynthesis; phosphatidylglycerol from CDP-diacylglycerol: step 1/2. In terms of biological role, catalyzes the committed step to the synthesis of the acidic phospholipids, including phosphatidylglycerol (PG). Together with PGPS1, required for the proper embryo development by providing PG accurate levels. This is CDP-diacylglycerol--glycerol-3-phosphate 3-phosphatidyltransferase 2 from Arabidopsis thaliana (Mouse-ear cress).